The sequence spans 404 residues: MKLPIYLDYAATTPVDPRVAEKMMQCMTMDGIFGNPASRSHRYGWQAEEAVDIARNQIAELINADPREIVFTSGATESDNLAIKGVAHFYQKKGKHIITSKTEHKAVLDTCRQLEREGYEVTYLQPEANGLIPVAMIEAAMREDTLLVSIMQVNNEIGVIQDIDAIGELCRSRKIVFHVDAAQSAGKMPIDVQKTKVDLMSISAHKMYGPKGIGALYVSRKPRIRLEAAMHGGGHERGMRSGTLATHQIVGFGEAAAIAKTDMDSDNERIRRLRDKLWNGINHIEETYINGDMEQRHCGSLNVSFNFVEGESLMMALKDLAVSSGSACTSASLEPSYVLRALGLNDEMAHSSIRFSIGRFTTDEEIEHAIETITESIGNLREMSPLWEMFKDGIDLDSVQWAHH.

Residues 75–76 (AT), asparagine 155, glutamine 183, and 203–205 (SAH) contribute to the pyridoxal 5'-phosphate site. Lysine 206 bears the N6-(pyridoxal phosphate)lysine mark. Threonine 243 provides a ligand contact to pyridoxal 5'-phosphate. The Cysteine persulfide intermediate role is filled by cysteine 328. Cysteine 328 contributes to the [2Fe-2S] cluster binding site.

This sequence belongs to the class-V pyridoxal-phosphate-dependent aminotransferase family. NifS/IscS subfamily. In terms of assembly, homodimer. Forms a heterotetramer with IscU, interacts with other sulfur acceptors. Pyridoxal 5'-phosphate serves as cofactor.

The protein resides in the cytoplasm. It catalyses the reaction (sulfur carrier)-H + L-cysteine = (sulfur carrier)-SH + L-alanine. The protein operates within cofactor biosynthesis; iron-sulfur cluster biosynthesis. In terms of biological role, master enzyme that delivers sulfur to a number of partners involved in Fe-S cluster assembly, tRNA modification or cofactor biosynthesis. Catalyzes the removal of elemental sulfur atoms from cysteine to produce alanine. Functions as a sulfur delivery protein for Fe-S cluster synthesis onto IscU, an Fe-S scaffold assembly protein, as well as other S acceptor proteins. In Shewanella piezotolerans (strain WP3 / JCM 13877), this protein is Cysteine desulfurase IscS.